The following is a 969-amino-acid chain: Leucine--tRNA ligase (969 aa).

Residues 1-23 (MTESPTTSPATGSGAAAPDSDAP) form a disordered region. A 'HIGH' region motif is present at residues 78-89 (PYPSGEGLHVGH). A 'KMSKS' region motif is present at residues 737 to 741 (KIGKS). Lys740 is an ATP binding site.

It belongs to the class-I aminoacyl-tRNA synthetase family.

Its subcellular location is the cytoplasm. The catalysed reaction is tRNA(Leu) + L-leucine + ATP = L-leucyl-tRNA(Leu) + AMP + diphosphate. This chain is Leucine--tRNA ligase, found in Mycolicibacterium paratuberculosis (strain ATCC BAA-968 / K-10) (Mycobacterium paratuberculosis).